A 318-amino-acid polypeptide reads, in one-letter code: Ribosomal RNA small subunit methyltransferase H (318 aa).

S-adenosyl-L-methionine is bound by residues 42-44 (GGH), aspartate 62, phenylalanine 86, aspartate 108, and glutamine 115.

Belongs to the methyltransferase superfamily. RsmH family.

It is found in the cytoplasm. It catalyses the reaction cytidine(1402) in 16S rRNA + S-adenosyl-L-methionine = N(4)-methylcytidine(1402) in 16S rRNA + S-adenosyl-L-homocysteine + H(+). In terms of biological role, specifically methylates the N4 position of cytidine in position 1402 (C1402) of 16S rRNA. This is Ribosomal RNA small subunit methyltransferase H from Yersinia pestis (strain Pestoides F).